The following is a 549-amino-acid chain: MNCHSVPLQGPVSFKDVTVDFTQEEWQRLDPAQKALYRDVMLENYCHFISVGFHITKPDMIRKLEQGEELWTERMFPSQSYLEDEEVLVKFRDYQDKPPTSIVIINHKKLIKERNNVYEKTLGNNHIISKTLFEYKSDGKVLKNISDFISRDINPVMGTLGDSSEWEESVLTSEQEKTHPVPTLYKQIGRNLSSSLELAQHQKTQIPEQRFECDECDSSFLMTEVAFPHDRAHRGVRDFNCSKDEIAFFEKSDLGIHPHNLMEKKCSTYNKYGKLLCRKSVFVMHPRSQVDERPFQCPYCGNSFRRKSYLIEHQRIHTGEKPYICSQCGKAFRQKTALTLHEKTHTDGKPYLCVDCGKSFRQKATLTRHHKTHTGEKAYECTQCGSAFGKKSYLIDHQRTHTGEKPYQCAECGKAFIQKTTLTVHQRTHTGEKPYMCSECGKSFCQKTTLTLHQRIHTGEKPYVCSDCGKSFRQKAILTVHYRIHTGEKSNGCPQCGKAFSRKSNLIRHQKTHTGEKPYECHECGKFFSCKSNLVAHQKTHKAETVRFQ.

Positions 1–105 (MNCHSVPLQG…DKPPTSIVII (105 aa)) are mediates interaction with TRIM28. 2 represses transcription regions span residues 10-51 (GPVS…FISV) and 75-210 (MFPS…PEQR). In terms of domain architecture, KRAB spans 12 to 83 (VSFKDVTVDF…RMFPSQSYLE (72 aa)). 10 consecutive C2H2-type zinc fingers follow at residues 211–233 (FECDECDSSFLMTEVAFPHDRAH), 295–317 (FQCPYCGNSFRRKSYLIEHQRIH), 323–345 (YICSQCGKAFRQKTALTLHEKTH), 351–373 (YLCVDCGKSFRQKATLTRHHKTH), 379–401 (YECTQCGSAFGKKSYLIDHQRTH), 407–429 (YQCAECGKAFIQKTTLTVHQRTH), 435–457 (YMCSECGKSFCQKTTLTLHQRIH), 463–485 (YVCSDCGKSFRQKAILTVHYRIH), 491–513 (NGCPQCGKAFSRKSNLIRHQKTH), and 519–541 (YECHECGKFFSCKSNLVAHQKTH). The tract at residues 295 to 549 (FQCPYCGNSF…THKAETVRFQ (255 aa)) is required for transcriptional repression activity; probably mediates sequence-specific DNA-binding.

The protein belongs to the krueppel C2H2-type zinc-finger protein family. As to quaternary structure, interacts with TRIM28; enhances the transcriptional repressor activity. In terms of tissue distribution, ubiquitously expressed with higher expression in lung, kidney and testis.

It is found in the nucleus. Its function is as follows. Functions as a sequence-specific transcriptional repressor. The chain is Zinc finger protein 382 (Znf382) from Rattus norvegicus (Rat).